We begin with the raw amino-acid sequence, 175 residues long: ATP-dependent protease subunit HslV (175 aa).

The active site involves Thr-2. Na(+) is bound by residues Ala-156, Cys-159, and Thr-162.

The protein belongs to the peptidase T1B family. HslV subfamily. In terms of assembly, a double ring-shaped homohexamer of HslV is capped on each side by a ring-shaped HslU homohexamer. The assembly of the HslU/HslV complex is dependent on binding of ATP.

The protein resides in the cytoplasm. The catalysed reaction is ATP-dependent cleavage of peptide bonds with broad specificity.. Allosterically activated by HslU binding. Its function is as follows. Protease subunit of a proteasome-like degradation complex believed to be a general protein degrading machinery. This chain is ATP-dependent protease subunit HslV, found in Rhizobium johnstonii (strain DSM 114642 / LMG 32736 / 3841) (Rhizobium leguminosarum bv. viciae).